The primary structure comprises 105 residues: Molt-inhibiting hormone (105 aa).

Residues 1-28 (MYRLAMRTWLAIVIVVVGTSLLFDTASA) form the signal peptide. 3 disulfide bridges follow: cysteine 35/cysteine 72, cysteine 52/cysteine 68, and cysteine 55/cysteine 81.

The protein belongs to the arthropod CHH/MIH/GIH/VIH hormone family. In terms of tissue distribution, produced by the medulla terminalis X-organ in the eyestalks and transported to the sinus gland where it is stored and released.

It is found in the secreted. Inhibits Y-organs where molting hormone (ecdysteroid) is secreted. A molting cycle is initiated when MIH secretion diminishes or stops. Has little or no hyperglycemic activity. The protein is Molt-inhibiting hormone of Penaeus japonicus (Kuruma prawn).